Consider the following 121-residue polypeptide: Small ribosomal subunit protein uS13 (121 aa).

Positions 94–121 (GLPVRGQNTKNNARTRKGPRRTVANKKK) are disordered. Over residues 106-121 (ARTRKGPRRTVANKKK) the composition is skewed to basic residues.

Belongs to the universal ribosomal protein uS13 family. Part of the 30S ribosomal subunit. Forms a loose heterodimer with protein S19. Forms two bridges to the 50S subunit in the 70S ribosome.

Located at the top of the head of the 30S subunit, it contacts several helices of the 16S rRNA. In the 70S ribosome it contacts the 23S rRNA (bridge B1a) and protein L5 of the 50S subunit (bridge B1b), connecting the 2 subunits; these bridges are implicated in subunit movement. Contacts the tRNAs in the A and P-sites. The chain is Small ribosomal subunit protein uS13 from Anoxybacillus flavithermus (strain DSM 21510 / WK1).